The sequence spans 296 residues: Low affinity immunoglobulin gamma Fc region receptor II (296 aa).

A signal peptide spans 1–42 (MGIPSFLAFPAARRNRAHCTPWHPWGHMLLWTALLFLAPVSG). Residues 43–225 (KPDLPKAVVT…SSSSGPSSMT (183 aa)) lie on the Extracellular side of the membrane. Ig-like C2-type domains lie at 47–129 (PKAV…DVIS) and 130–212 (DWLL…VNIT). 2 disulfide bridges follow: Cys70–Cys112 and Cys151–Cys195. N-linked (GlcNAc...) asparagine glycosylation is found at Asn79, Asn86, Asn105, Asn179, Asn186, and Asn210. The chain crosses the membrane as a helical span at residues 226–246 (AVAIGTCFAAVAIVAAIITWF). The Cytoplasmic segment spans residues 247–296 (RLRRKPISAGLTDAENDAARTEAENTVTYSLLSHPDVAEEDSESDYQKRL). The ITIM motif motif lies at 273-278 (VTYSLL). Tyr275 carries the post-translational modification Phosphotyrosine; by SRC-type Tyr-kinases. Ser288 carries the phosphoserine modification. The residue at position 292 (Tyr292) is a Phosphotyrosine.

Interacts with FGR and LYN. In terms of processing, phosphorylated by SRC-type Tyr-kinases such as LYN, BLK, FYN and SYK. In terms of tissue distribution, higher expression is found in macrophages than in neutrophils.

The protein resides in the cell membrane. In terms of biological role, binds to the Fc region of immunoglobulins gamma. Low affinity receptor. The chain is Low affinity immunoglobulin gamma Fc region receptor II (FCGR2) from Bos taurus (Bovine).